A 137-amino-acid polypeptide reads, in one-letter code: Small ribosomal subunit protein uS12 (137 aa).

Positions 31 to 41 (MSRKQTNNTAP) are enriched in polar residues. The interval 31–57 (MSRKQTNNTAPQKRGVATRVGTMTPKK) is disordered. Asp102 bears the 3-methylthioaspartic acid mark.

The protein belongs to the universal ribosomal protein uS12 family. In terms of assembly, part of the 30S ribosomal subunit. Contacts proteins S8 and S17. May interact with IF1 in the 30S initiation complex.

In terms of biological role, with S4 and S5 plays an important role in translational accuracy. Functionally, interacts with and stabilizes bases of the 16S rRNA that are involved in tRNA selection in the A site and with the mRNA backbone. Located at the interface of the 30S and 50S subunits, it traverses the body of the 30S subunit contacting proteins on the other side and probably holding the rRNA structure together. The combined cluster of proteins S8, S12 and S17 appears to hold together the shoulder and platform of the 30S subunit. The sequence is that of Small ribosomal subunit protein uS12 from Oenococcus oeni (strain ATCC BAA-331 / PSU-1).